The chain runs to 60 residues: UPF0434 protein ECA2555 (60 aa).

Belongs to the UPF0434 family.

This Pectobacterium atrosepticum (strain SCRI 1043 / ATCC BAA-672) (Erwinia carotovora subsp. atroseptica) protein is UPF0434 protein ECA2555.